Here is a 554-residue protein sequence, read N- to C-terminus: Dihydroxy-acid dehydratase (554 aa).

Residue Cys-51 coordinates [2Fe-2S] cluster. Asp-83 serves as a coordination point for Mg(2+). A [2Fe-2S] cluster-binding site is contributed by Cys-124. Mg(2+) is bound by residues Asp-125 and Lys-126. N6-carboxylysine is present on Lys-126. Cys-193 provides a ligand contact to [2Fe-2S] cluster. Glu-444 is a binding site for Mg(2+). Ser-470 serves as the catalytic Proton acceptor.

It belongs to the IlvD/Edd family. In terms of assembly, homodimer. The cofactor is [2Fe-2S] cluster. Mg(2+) serves as cofactor.

It catalyses the reaction (2R)-2,3-dihydroxy-3-methylbutanoate = 3-methyl-2-oxobutanoate + H2O. It carries out the reaction (2R,3R)-2,3-dihydroxy-3-methylpentanoate = (S)-3-methyl-2-oxopentanoate + H2O. It participates in amino-acid biosynthesis; L-isoleucine biosynthesis; L-isoleucine from 2-oxobutanoate: step 3/4. Its pathway is amino-acid biosynthesis; L-valine biosynthesis; L-valine from pyruvate: step 3/4. Functions in the biosynthesis of branched-chain amino acids. Catalyzes the dehydration of (2R,3R)-2,3-dihydroxy-3-methylpentanoate (2,3-dihydroxy-3-methylvalerate) into 2-oxo-3-methylpentanoate (2-oxo-3-methylvalerate) and of (2R)-2,3-dihydroxy-3-methylbutanoate (2,3-dihydroxyisovalerate) into 2-oxo-3-methylbutanoate (2-oxoisovalerate), the penultimate precursor to L-isoleucine and L-valine, respectively. The polypeptide is Dihydroxy-acid dehydratase (Vesicomyosocius okutanii subsp. Calyptogena okutanii (strain HA)).